We begin with the raw amino-acid sequence, 343 residues long: Probable potassium channel protein 2 (343 aa).

Residues 1–7 (METSKKL) lie on the Cytoplasmic side of the membrane. Residues 8 to 28 (VIVAVLSITLILTYAYLISII) traverse the membrane as a helical segment. Topologically, residues 29–61 (EGVDYFTALYFSVITITTTGYGDFTPKTFLGRT) are extracellular. Positions 46–51 (TTGYGD) match the Selectivity filter motif. A helical membrane pass occupies residues 62–82 (LTVVYLCVGVGIVMYLFSLIA). The Cytoplasmic portion of the chain corresponds to 83 to 343 (EFIVEGKFEE…NLVKKKKKKL (261 aa)). Residues 107 to 227 (KDHYIICGYG…KIAGANRVVS (121 aa)) enclose the RCK N-terminal domain. The 86-residue stretch at 253 to 338 (IKIAKDEYEE…LKYLENLVKK (86 aa)) folds into the RCK C-terminal domain.

It localises to the cell membrane. Functionally, probable potassium channel protein. The polypeptide is Probable potassium channel protein 2 (Methanocaldococcus jannaschii (strain ATCC 43067 / DSM 2661 / JAL-1 / JCM 10045 / NBRC 100440) (Methanococcus jannaschii)).